A 95-amino-acid chain; its full sequence is Co-chaperonin GroES (95 aa).

This sequence belongs to the GroES chaperonin family. As to quaternary structure, heptamer of 7 subunits arranged in a ring. Interacts with the chaperonin GroEL.

The protein localises to the cytoplasm. Together with the chaperonin GroEL, plays an essential role in assisting protein folding. The GroEL-GroES system forms a nano-cage that allows encapsulation of the non-native substrate proteins and provides a physical environment optimized to promote and accelerate protein folding. GroES binds to the apical surface of the GroEL ring, thereby capping the opening of the GroEL channel. The sequence is that of Co-chaperonin GroES from Rickettsia prowazekii (strain Madrid E).